The chain runs to 176 residues: Warthog protein 5 (176 aa).

Positions 1-21 (MCSMWLMASWLMAFVAGSTLA) are cleaved as a signal peptide. Asn70 is a glycosylation site (N-linked (GlcNAc...) asparagine).

In terms of tissue distribution, expressed in seam cells, excretory cell, reproductive system, pharynx, pharyngeal-intestinal valve cells, neurons and neuronal support cells.

It is found in the secreted. Intercellular signal essential for a variety of patterning events during development. This Caenorhabditis elegans protein is Warthog protein 5 (wrt-5).